Here is a 156-residue protein sequence, read N- to C-terminus: Large ribosomal subunit protein uL22 (156 aa).

Belongs to the universal ribosomal protein uL22 family. As to quaternary structure, part of the 50S ribosomal subunit.

This protein binds specifically to 23S rRNA. It makes multiple contacts with different domains of the 23S rRNA in the assembled 50S subunit and ribosome. In terms of biological role, the globular domain of the protein is located near the polypeptide exit tunnel on the outside of the subunit, while an extended beta-hairpin is found that lines the wall of the exit tunnel in the center of the 70S ribosome. The sequence is that of Large ribosomal subunit protein uL22 from Aeropyrum pernix (strain ATCC 700893 / DSM 11879 / JCM 9820 / NBRC 100138 / K1).